The sequence spans 192 residues: Xanthine phosphoribosyltransferase (192 aa).

Positions 20 and 27 each coordinate xanthine. A128–A132 provides a ligand contact to 5-phospho-alpha-D-ribose 1-diphosphate. K156 serves as a coordination point for xanthine.

Belongs to the purine/pyrimidine phosphoribosyltransferase family. Xpt subfamily. In terms of assembly, homodimer.

It is found in the cytoplasm. The catalysed reaction is XMP + diphosphate = xanthine + 5-phospho-alpha-D-ribose 1-diphosphate. It functions in the pathway purine metabolism; XMP biosynthesis via salvage pathway; XMP from xanthine: step 1/1. Functionally, converts the preformed base xanthine, a product of nucleic acid breakdown, to xanthosine 5'-monophosphate (XMP), so it can be reused for RNA or DNA synthesis. The protein is Xanthine phosphoribosyltransferase of Staphylococcus aureus (strain bovine RF122 / ET3-1).